The primary structure comprises 356 residues: C-C chemokine receptor 1-like protein 1 (356 aa).

The Extracellular segment spans residues 1–32 (MEIPAVTEPSYNTVAKNDFMSGFLCFSINVRA). The chain crosses the membrane as a helical span at residues 33-60 (FGITVLTPLYSLVFIIGVIGHVLVVLVL). At 61–67 (IQHKRLR) the chain is on the cytoplasmic side. A helical transmembrane segment spans residues 68–92 (NMTSIYLFNLAISDLVFLSTLPFWV). Over 93–108 (DYIMKGDWIFGNAMCK) the chain is Extracellular. Residues cysteine 107 and cysteine 184 are joined by a disulfide bond. The chain crosses the membrane as a helical span at residues 109-130 (FVSGFYYLGLYSDMFFITLLTI). Over 131 to 147 (DRYLAVVHVVFALRART) the chain is Cytoplasmic. A helical membrane pass occupies residues 148-172 (VTFGIISSIITWVLAALVSIPCLYV). Topologically, residues 173–198 (FKSQMEFTYHTCRAILPRKSLIRFLR) are extracellular. A helical transmembrane segment spans residues 199–224 (FQALTMNILGLILPLLAMIICYTRII). At 225-240 (NVLHRRPNKKKAKVMR) the chain is on the cytoplasmic side. The chain crosses the membrane as a helical span at residues 241–265 (LIFVITLLFFLLLAPYYLAAFVSAF). Topologically, residues 266–282 (EDVLFTPSCLRSQQVDL) are extracellular. Residues 283–306 (SLMITEALAYTHCCVNPVIYVFVG) traverse the membrane as a helical segment. Residues 307–356 (KRFRKYLWQLFRRHTAITLPQWLPFLSVDRAQRASATPPSTVEIETSADL) lie on the Cytoplasmic side of the membrane.

The protein belongs to the G-protein coupled receptor 1 family. Detected in the spleen, liver and leukocytes.

It is found in the cell membrane. Probable receptor for a C-C type chemokine. The chain is C-C chemokine receptor 1-like protein 1 (Ccr1l1) from Mus musculus (Mouse).